A 763-amino-acid chain; its full sequence is Phosphoglycerol transferase I (763 aa).

The next 4 membrane-spanning stretches (helical) occupy residues leucine 4–tryptophan 19, tryptophan 26–serine 48, tyrosine 76–leucine 98, and proline 105–alanine 127.

This sequence belongs to the OpgB family.

The protein resides in the cell inner membrane. The enzyme catalyses a phosphatidylglycerol + a membrane-derived-oligosaccharide D-glucose = a 1,2-diacyl-sn-glycerol + a membrane-derived-oligosaccharide 6-(glycerophospho)-D-glucose.. It participates in glycan metabolism; osmoregulated periplasmic glucan (OPG) biosynthesis. Its function is as follows. Transfers a phosphoglycerol residue from phosphatidylglycerol to the membrane-bound nascent glucan backbones. The polypeptide is Phosphoglycerol transferase I (Escherichia coli O157:H7).